A 203-amino-acid chain; its full sequence is Glycerol-3-phosphate acyltransferase (203 aa).

A run of 5 helical transmembrane segments spans residues 13-33, 62-82, 88-108, 118-138, and 159-179; these read TLAC…LILT, LAAA…AIAS, AGIA…WLSF, IGVL…IWLA, and IALY…MTAI.

The protein belongs to the PlsY family. Probably interacts with PlsX.

It is found in the cell inner membrane. The catalysed reaction is an acyl phosphate + sn-glycerol 3-phosphate = a 1-acyl-sn-glycero-3-phosphate + phosphate. It functions in the pathway lipid metabolism; phospholipid metabolism. Its function is as follows. Catalyzes the transfer of an acyl group from acyl-phosphate (acyl-PO(4)) to glycerol-3-phosphate (G3P) to form lysophosphatidic acid (LPA). This enzyme utilizes acyl-phosphate as fatty acyl donor, but not acyl-CoA or acyl-ACP. This Rhizobium meliloti (strain 1021) (Ensifer meliloti) protein is Glycerol-3-phosphate acyltransferase.